The primary structure comprises 83 residues: Small ribosomal subunit protein bS16 (83 aa).

Belongs to the bacterial ribosomal protein bS16 family.

This is Small ribosomal subunit protein bS16 from Herminiimonas arsenicoxydans.